The following is a 492-amino-acid chain: MTTTETSLSADTKNGIDFKIADLSLADFGRKELRIAEHEMPGLMSLRREYAEVQPLKGARISGSLHMTVQTAVLIETLTALGAEVRWASCNIFSTQDHAAAAVVVGPHGTPEEPKGVPVFAWKGESLEEYWWCAEQMLTWPDSDKPANMILDDGGDATMLVLRGMQYEKAGVVPPAEEDDSAEWKVFLGLLRSRFETDKGKWTKIAESVKGVTEETTTGVLRLYQFAAAGDLAFPAINVNDSVTKSKFDNKYGTRHSLIDGINRGTDALIGGKKVLICGYGDVGKGCAEAMKGQGARVSVTEIDPINALQAMMEGFDVVTVEDAIGDADIVVTSTGNKDIIMLEHIKAMKDHSILGNIGHFDNEIDMAGLERSGATRTNIKPQVDLWTFGDTGRSIIVLSEGRLLNLGNATGHPSFVMSNSFANQTIAQIELWTKNDEYDNEVYRLPKHLDEKVARIHVEALGGRLTKLTKDQAEYLGVDVEGPYKPDHYRY.

Residues Thr68, Asp153, and Glu215 each contribute to the substrate site. 216–218 is a binding site for NAD(+); the sequence is TTT. Substrate is bound by residues Lys245 and Asp249. NAD(+) is bound by residues Asn250, 279–284, Glu302, Asn337, 358–360, and Asn406; these read GYGDVG and IGH.

The protein belongs to the adenosylhomocysteinase family. NAD(+) serves as cofactor.

It is found in the cytoplasm. It catalyses the reaction S-adenosyl-L-homocysteine + H2O = L-homocysteine + adenosine. It participates in amino-acid biosynthesis; L-homocysteine biosynthesis; L-homocysteine from S-adenosyl-L-homocysteine: step 1/1. In terms of biological role, may play a key role in the regulation of the intracellular concentration of adenosylhomocysteine. The sequence is that of Adenosylhomocysteinase from Mycobacterium marinum (strain ATCC BAA-535 / M).